A 206-amino-acid chain; its full sequence is Nucleoside triphosphate pyrophosphatase (206 aa).

Catalysis depends on aspartate 76, which acts as the Proton acceptor.

The protein belongs to the Maf family. The cofactor is a divalent metal cation.

The protein localises to the cytoplasm. The enzyme catalyses a ribonucleoside 5'-triphosphate + H2O = a ribonucleoside 5'-phosphate + diphosphate + H(+). It catalyses the reaction a 2'-deoxyribonucleoside 5'-triphosphate + H2O = a 2'-deoxyribonucleoside 5'-phosphate + diphosphate + H(+). Its function is as follows. Nucleoside triphosphate pyrophosphatase. May have a dual role in cell division arrest and in preventing the incorporation of modified nucleotides into cellular nucleic acids. In Streptomyces avermitilis (strain ATCC 31267 / DSM 46492 / JCM 5070 / NBRC 14893 / NCIMB 12804 / NRRL 8165 / MA-4680), this protein is Nucleoside triphosphate pyrophosphatase.